Consider the following 339-residue polypeptide: DNA-directed RNA polymerase subunit alpha (339 aa).

The alpha N-terminal domain (alpha-NTD) stretch occupies residues M1 to E235. An alpha C-terminal domain (alpha-CTD) region spans residues F251–Y339.

It belongs to the RNA polymerase alpha chain family. As to quaternary structure, homodimer. The RNAP catalytic core consists of 2 alpha, 1 beta, 1 beta' and 1 omega subunit. When a sigma factor is associated with the core the holoenzyme is formed, which can initiate transcription.

The catalysed reaction is RNA(n) + a ribonucleoside 5'-triphosphate = RNA(n+1) + diphosphate. Its function is as follows. DNA-dependent RNA polymerase catalyzes the transcription of DNA into RNA using the four ribonucleoside triphosphates as substrates. In Rhodopseudomonas palustris (strain HaA2), this protein is DNA-directed RNA polymerase subunit alpha.